A 91-amino-acid polypeptide reads, in one-letter code: MVRVGAAAAVLVLAAAAAAMAAEPPTDDGAVRVAAGLTKCVSGCGSKVTSCLLGCYGGGGGAAAAATAMPFCVIGCTSDVLSCATGCSTSL.

A signal peptide spans Met1 to Ala21.

In terms of biological role, required for tapetum and pollen development. This Oryza sativa subsp. japonica (Rice) protein is Anther-specific protein RTS.